A 287-amino-acid polypeptide reads, in one-letter code: Probable ribosomal RNA small subunit methyltransferase A (287 aa).

S-adenosyl-L-methionine contacts are provided by His-29, Leu-31, Gly-56, Glu-77, Asp-102, and Asn-117.

It belongs to the class I-like SAM-binding methyltransferase superfamily. rRNA adenine N(6)-methyltransferase family. RsmA subfamily.

It localises to the cytoplasm. Specifically dimethylates two adjacent adenosines in the loop of a conserved hairpin near the 3'-end of 16S rRNA in the 30S particle. May play a critical role in biogenesis of 30S subunits. The polypeptide is Probable ribosomal RNA small subunit methyltransferase A (Methanosarcina barkeri (strain Fusaro / DSM 804)).